A 325-amino-acid chain; its full sequence is Elongation factor P--(R)-beta-lysine ligase (325 aa).

76–78 (SPE) is a substrate binding site. ATP-binding positions include 100–102 (RNE) and Asn109. Tyr118 serves as a coordination point for substrate. 244-245 (EL) is a binding site for ATP. Position 251 (Glu251) interacts with substrate. ATP is bound at residue Gly300.

This sequence belongs to the class-II aminoacyl-tRNA synthetase family. EpmA subfamily. In terms of assembly, homodimer.

It catalyses the reaction D-beta-lysine + L-lysyl-[protein] + ATP = N(6)-((3R)-3,6-diaminohexanoyl)-L-lysyl-[protein] + AMP + diphosphate + H(+). In terms of biological role, with EpmB is involved in the beta-lysylation step of the post-translational modification of translation elongation factor P (EF-P). Catalyzes the ATP-dependent activation of (R)-beta-lysine produced by EpmB, forming a lysyl-adenylate, from which the beta-lysyl moiety is then transferred to the epsilon-amino group of a conserved specific lysine residue in EF-P. This is Elongation factor P--(R)-beta-lysine ligase from Pectobacterium carotovorum subsp. carotovorum (strain PC1).